The following is a 361-amino-acid chain: uncharacterized protein (361 aa).

41–48 lines the ATP pocket; sequence GPLNSGKT.

It belongs to the archaeal ATPase family.

This is an uncharacterized protein from Methanocaldococcus jannaschii (strain ATCC 43067 / DSM 2661 / JAL-1 / JCM 10045 / NBRC 100440) (Methanococcus jannaschii).